The primary structure comprises 354 residues: ORC1-type DNA replication protein 9 (354 aa).

ATP is bound by residues 63 to 67, Y195, and R207; that span reads TGKTC.

This sequence belongs to the CDC6/cdc18 family.

Involved in regulation of DNA replication. This is ORC1-type DNA replication protein 9 (orc9-1) from Halobacterium salinarum (strain ATCC 700922 / JCM 11081 / NRC-1) (Halobacterium halobium).